Here is a 138-residue protein sequence, read N- to C-terminus: Transcriptional activator protein Pur-alpha (138 aa).

A Phosphoserine modification is found at Ser-70.

Belongs to the PUR DNA-binding protein family. As to quaternary structure, homodimer, heterodimer with PURB and heterotrimer with PURB and YBX1/Y-box protein 1. Interacts with FMR1; this interaction occurs in association with polyribosome.

The protein localises to the nucleus. In terms of biological role, this is a probable transcription activator that specifically binds the purine-rich single strand of the PUR element located upstream of the c-Myc gene. May play a role in the initiation of DNA replication and in recombination. This Rattus norvegicus (Rat) protein is Transcriptional activator protein Pur-alpha.